The chain runs to 145 residues: Probable low molecular weight protein-tyrosine-phosphatase EpsP (145 aa).

C9 functions as the Nucleophile in the catalytic mechanism. The active site involves R15. The active-site Proton donor is the D114.

It belongs to the low molecular weight phosphotyrosine protein phosphatase family.

It catalyses the reaction O-phospho-L-tyrosyl-[protein] + H2O = L-tyrosyl-[protein] + phosphate. It functions in the pathway glycan metabolism; exopolysaccharide biosynthesis. Its function is as follows. May be involved in assembly or function of the EPS I polymerization/export complex and/or the EpsB ATPase. Alternatively it may function in the removal of the terminal phosphate from C55-isoprenyl pyrophosphate in order to recycle the C55-isoprenyl phosphate lipid carrier used in the synthesis of polysaccharide repeat units. This is Probable low molecular weight protein-tyrosine-phosphatase EpsP (epsP) from Ralstonia nicotianae (strain ATCC BAA-1114 / GMI1000) (Ralstonia solanacearum).